Consider the following 1212-residue polypeptide: Histone demethylase UTY (1212 aa).

TPR repeat units follow at residues 88–121, 125–158, 165–193, 200–233, 245–278, 279–312, 313–346, and 347–380; these read SDFF…QTDY, AAFL…DPNF, HLRL…IDCN, VEIQ…ESLP, GWMH…DPNS, GQSW…SEAS, ADTW…DHGH, and AAAW…KSCN. Residues 530-539 show a composition bias toward basic and acidic residues; that stretch reads FTKESKDSRS. The tract at residues 530-555 is disordered; sequence FTKESKDSRSKSLTSKTSRKDRDTSN. Residue Thr752 is modified to Phosphothreonine. A disordered region spans residues 865–886; sequence RRTQVKDYSDNESTCSDNSGRR. The JmjC domain maps to 907–1070; that stretch reads KWKLQLHELT…YKLAVERYEW (164 aa). Residues His958, Glu960, and His1038 each contribute to the Fe cation site. 4 residues coordinate Zn(2+): Cys1143, Cys1146, Cys1170, and Cys1173.

Belongs to the UTX family. In terms of assembly, binds TLE1 and TLE2. Requires L-ascorbate as cofactor. The cofactor is Fe(2+).

It localises to the nucleus. It catalyses the reaction N(6),N(6),N(6)-trimethyl-L-lysyl(27)-[histone H3] + 2 2-oxoglutarate + 2 O2 = N(6)-methyl-L-lysyl(27)-[histone H3] + 2 formaldehyde + 2 succinate + 2 CO2. Its function is as follows. Male-specific histone demethylase that catalyzes trimethylated 'Lys-27' (H3K27me3) demethylation in histone H3. Has relatively low KDM activity. The chain is Histone demethylase UTY (Uty) from Mus musculus (Mouse).